Here is a 706-residue protein sequence, read N- to C-terminus: Glutamine-dependent NAD(+) synthetase (706 aa).

One can recognise a CN hydrolase domain in the interval 5 to 275; that stretch reads VTVATCALNQ…VEVLTATLDL (271 aa). The active-site Proton acceptor; for glutaminase activity is the E45. K114 serves as the catalytic For glutaminase activity. C175 acts as the Nucleophile; for glutaminase activity in catalysis. A ligase region spans residues 325–706; the sequence is YHSPEEEISL…AAPQSLDGVD (382 aa). ATP is bound at residue 355 to 362; that stretch reads PLSGGVDS. The active site involves S357.

This sequence in the C-terminal section; belongs to the NAD synthetase family. Homohexamer.

The catalysed reaction is deamido-NAD(+) + L-glutamine + ATP + H2O = L-glutamate + AMP + diphosphate + NAD(+) + H(+). The protein operates within cofactor biosynthesis; NAD(+) biosynthesis; NAD(+) from deamido-NAD(+) (L-Gln route): step 1/1. Functionally, catalyzes the final step of the nicotinamide adenine dinucleotide (NAD) de novo synthesis pathway, the ATP-dependent amidation of deamido-NAD using L-glutamine as a nitrogen source. This chain is Glutamine-dependent NAD(+) synthetase (NADSYN1), found in Macaca fascicularis (Crab-eating macaque).